We begin with the raw amino-acid sequence, 440 residues long: Chorismate synthase 1, chloroplastic (440 aa).

Residues 1–54 constitute a chloroplast transit peptide; the sequence is MASFVPTKQFVGASSSSDIGSSRLVSLQLPSKFSSSNFHLPSRPSQLKRLEIQA. The tract at residues 100–147 is disordered; that stretch reads RRRPGQSRITTPRKETDTCKISSGTADGLTTGSPIKVEVPNTDQRGND. The segment covering 118–132 has biased composition (polar residues); sequence CKISSGTADGLTTGS.

This sequence belongs to the chorismate synthase family. In terms of assembly, homotetramer. The cofactor is FMNH2. Predominantly expressed in flowers and roots and, to a lesser extent, in stems, leaves, and cotyledons.

Its subcellular location is the plastid. It is found in the chloroplast. The catalysed reaction is 5-O-(1-carboxyvinyl)-3-phosphoshikimate = chorismate + phosphate. The protein operates within metabolic intermediate biosynthesis; chorismate biosynthesis; chorismate from D-erythrose 4-phosphate and phosphoenolpyruvate: step 7/7. Catalyzes the last common step of the biosynthesis of aromatic amino acids, produced via the shikimic acid pathway. The chain is Chorismate synthase 1, chloroplastic (CS1) from Solanum lycopersicum (Tomato).